The following is a 369-amino-acid chain: Septin-5 (369 aa).

The residue at position 13 (Thr13) is a Phosphothreonine. The 274-residue stretch at 41-314 (KGFDFTLMVA…ENYRAHCIQQ (274 aa)) folds into the Septin-type G domain. A G1 motif region spans residues 51-58 (GESGLGKS). Residues 51-58 (GESGLGKS), Thr85, and Gly111 each bind GTP. The tract at residues 108 to 111 (DTPG) is G3 motif. Arg168 is subject to Omega-N-methylarginine. Positions 189–192 (AKAD) are G4 motif. 190–198 (KADCLVPSE) serves as a coordination point for GTP. Ser225 bears the Phosphoserine mark. Residues Gly248 and Arg263 each contribute to the GTP site. Ser327 carries the phosphoserine modification. At Thr336 the chain carries Phosphothreonine. Residues 338–369 (DSETEKLIRMKDEELRRMQEMLQKMKQRMQDQ) adopt a coiled-coil conformation.

Belongs to the TRAFAC class TrmE-Era-EngA-EngB-Septin-like GTPase superfamily. Septin GTPase family. In terms of assembly, septins polymerize into heterooligomeric protein complexes that form filaments, and can associate with cellular membranes, actin filaments and microtubules. GTPase activity is required for filament formation. Interacts with SEPTIN2 and SEPTIN5. In platelets, associated with a complex containing STX4. Interacts with PRKN; this interaction leads to SEPTIN5 ubiquitination and degradation. Interacts with DYRK1A. Interacts with STX1A; in the cerebellar cortex. Phosphorylated by DYRK1A. As to expression, expressed in brain and testis and at lower level in heart, spleen, lung and kidney.

The protein localises to the cytoplasm. It localises to the cytoskeleton. Filament-forming cytoskeletal GTPase. May play a role in cytokinesis (Potential). May play a role in platelet secretion. The sequence is that of Septin-5 from Rattus norvegicus (Rat).